The following is a 194-amino-acid chain: Isopentenyl-diphosphate Delta-isomerase (194 aa).

Residues histidine 27 and histidine 34 each contribute to the Mn(2+) site. In terms of domain architecture, Nudix hydrolase spans 32-166 (ALHLAFSCHV…PWAFSPWLTL (135 aa)). Cysteine 69 is a catalytic residue. Histidine 71 contacts Mn(2+). Glutamate 89 provides a ligand contact to Mg(2+). Mn(2+) is bound by residues glutamate 116 and glutamate 118. Glutamate 118 is an active-site residue.

This sequence belongs to the IPP isomerase type 1 family. It depends on Mg(2+) as a cofactor. Mn(2+) serves as cofactor.

The protein localises to the cytoplasm. It carries out the reaction isopentenyl diphosphate = dimethylallyl diphosphate. It functions in the pathway isoprenoid biosynthesis; dimethylallyl diphosphate biosynthesis; dimethylallyl diphosphate from isopentenyl diphosphate: step 1/1. Its function is as follows. Catalyzes the 1,3-allylic rearrangement of the homoallylic substrate isopentenyl (IPP) to its highly electrophilic allylic isomer, dimethylallyl diphosphate (DMAPP). In Clavibacter michiganensis subsp. michiganensis (strain NCPPB 382), this protein is Isopentenyl-diphosphate Delta-isomerase.